The chain runs to 47 residues: Type II secretion system protein N (47 aa).

It belongs to the GSP N family.

The protein resides in the cell inner membrane. Involved in a type II secretion system (T2SS, formerly general secretion pathway, GSP) for the export of proteins. In Aeromonas salmonicida, this protein is Type II secretion system protein N (exeN).